Reading from the N-terminus, the 372-residue chain is MSTNDEENGTVIEVKNVPEPSPETWYSVFLRQASVYGVAAGYCLSASLLSIINKWAIMKFPYPGALTAMQYFTSAAGVLLCAQMKLIEHDSLNLLTMWRFLPAAMIFYLSLFTNSELLLHANVDTFIVFRSAVPIFVAIGETLFLHQPWPSVKTWGSLATIFGGSLLYVFTDYQFTIAAYSWALAYLVSMTIDFVYIKHVVMTIGLNTWGLVLYNNLEALLLFPLELLIMGELKKIKHEITDETDWYSLQVVLPVGLSCLFGLAISFFGFSCRRAISATGFTVLGIVNKLLTVVINLMVWDKHSTFVGTLGLLVCMFGGVMYQQSTIKKPNATQEAKPQEQDEEQEKLLEMQENKESNSVDIKETLKSEEKL.

Helical transmembrane passes span 33-53, 60-80, 92-112, 125-145, 155-175, 177-197, 209-229, 251-271, 280-300, and 303-323; these read ASVYGVAAGYCLSASLLSIIN, FPYPGALTAMQYFTSAAGVLL, LNLLTMWRFLPAAMIFYLSLF, TFIVFRSAVPIFVAIGETLFL, WGSLATIFGGSLLYVFTDYQF, IAAYSWALAYLVSMTIDFVYI, WGLVLYNNLEALLLFPLELLI, VVLPVGLSCLFGLAISFFGFS, GFTVLGIVNKLLTVVINLMVW, and HSTFVGTLGLLVCMFGGVMYQ. The interval 331–372 is disordered; the sequence is NATQEAKPQEQDEEQEKLLEMQENKESNSVDIKETLKSEEKL. Residues 346 to 372 show a composition bias toward basic and acidic residues; it reads EKLLEMQENKESNSVDIKETLKSEEKL.

Belongs to the nucleotide-sugar transporter family. GDP-Mannose:GMP antiporter (GMA) (TC 2.A.7.13) subfamily. In terms of tissue distribution, expressed in rosette leaves, stems, flowers and siliques.

It localises to the golgi apparatus membrane. Functionally, GDP-mannose transporter that may be involved in the import of GDP-mannose from the cytoplasm into the Golgi lumen. The protein is GDP-mannose transporter GONST3 of Arabidopsis thaliana (Mouse-ear cress).